The chain runs to 1147 residues: SR-related and CTD-associated factor 4 (1147 aa).

One can recognise a CID domain in the interval 1–139; sequence MDAVNAFNQE…PLLDMAAGTS (139 aa). An N6-acetyllysine modification is found at K49. Disordered regions lie at residues 145-179, 235-254, 269-331, and 424-502; these read AENV…AVPQ, KTTP…PEQK, DEPE…QQPA, and VKRH…KPET. S154 carries the post-translational modification Phosphoserine. Composition is skewed to low complexity over residues 283–292 and 299–310; these read TAVTTTAPAA and TATVPAAAAPAA. Basic and acidic residues predominate over residues 424 to 433; that stretch reads VKRHMSDNRK. A compositionally biased stretch (basic residues) spans 434 to 475; that stretch reads SRSRSASRSPKRRRSRSGSRSRRSRHRRSRSRSRDRRRHSPR. Positions 477 to 492 are enriched in basic and acidic residues; the sequence is RSQERRDREKERERRQ. In terms of domain architecture, RRM spans 508 to 582; sequence TTLWVGQLDK…KSIKIAWALN (75 aa). 2 disordered regions span residues 629 to 661 and 879 to 1147; these read DWKG…IPKP and RPMP…EAPR. Position 656 is a phosphoserine (S656). Over residues 879–913 the composition is skewed to pro residues; it reads RPMPPHMMHRGPPPGPGGFAMPPPHGMKGPFPPHG. The span at 941-965 shows a compositional bias: low complexity; it reads QQPPQQPQQQPQPQAPQQPQQQQQQ. Positions 966 to 977 are enriched in pro residues; the sequence is QPPPSQQPPPTQ. At S1004 the chain carries Phosphoserine. The span at 1009-1085 shows a compositional bias: basic and acidic residues; that stretch reads VENDRERYGN…RGKEKPEVTD (77 aa).

Interacts with POLR2A; via C-terminal heptapeptide repeat domain (CTD) phosphorylated at 'Ser-2' and 'Ser-5'.

Its subcellular location is the nucleus. Its function is as follows. Anti-terminator protein required to prevent early mRNA termination during transcription. Together with SCAF8, acts by suppressing the use of early, alternative poly(A) sites, thereby preventing the accumulation of non-functional truncated proteins. Mechanistically, associates with the phosphorylated C-terminal heptapeptide repeat domain (CTD) of the largest RNA polymerase II subunit (POLR2A), and subsequently binds nascent RNA upstream of early polyadenylation sites to prevent premature mRNA transcript cleavage and polyadenylation. Independently of SCAF8, also acts as a suppressor of transcriptional readthrough. The sequence is that of SR-related and CTD-associated factor 4 from Homo sapiens (Human).